A 123-amino-acid chain; its full sequence is NHL-repeat-containing protein 4 (123 aa).

2 NHL repeats span residues 35-78 (QPLG…FPRA) and 79-119 (GPPI…YQGL).

The chain is NHL-repeat-containing protein 4 (NHLRC4) from Homo sapiens (Human).